Consider the following 251-residue polypeptide: Probable transcriptional regulatory protein cbdbA400 (251 aa).

The protein belongs to the TACO1 family.

It is found in the cytoplasm. The sequence is that of Probable transcriptional regulatory protein cbdbA400 from Dehalococcoides mccartyi (strain CBDB1).